Here is a 709-residue protein sequence, read N- to C-terminus: Solute carrier family 15 member 1 (709 aa).

The chain crosses the membrane as a helical span at residues 1-21; sequence MGMSKSRGCFGYPLSIFFIVV. The Extracellular segment spans residues 22-53; the sequence is NEFCERFSYYGMRALLVLYFRNFLGWDDNLST. N50 is a glycosylation site (N-linked (GlcNAc...) asparagine). Residues 54–74 form a helical membrane-spanning segment; sequence AIYHTFVALCYLTPILGALIA. Residues 75 to 82 lie on the Cytoplasmic side of the membrane; the sequence is DSWLGKFK. A helical membrane pass occupies residues 83 to 103; it reads TIVSLSIVYTIGQAVISVSSI. Over 104 to 118 the chain is Extracellular; it reads NDLTDHDHNGSPDSL. Residues 119-139 traverse the membrane as a helical segment; it reads PVHVALSMVGLALIALGTGGI. Residues 140 to 161 are Cytoplasmic-facing; sequence KPCVSAFGGDQFEEGQEKQRNR. The chain crosses the membrane as a helical span at residues 162–182; that stretch reads FFSIFYLAINGGSLLSTIITP. The Extracellular portion of the chain corresponds to 183 to 198; sequence ILRVQQCGIHSQQACY. The chain crosses the membrane as a helical span at residues 199-219; sequence PLAFGVPAALMAVALIVFVLG. Residues 220 to 276 are Cytoplasmic-facing; it reads SGMYKKFQPQGNIMGKVAKCIGFAIKNRFRHRSKAYPKREHWLDWAKEKYDERLISQ. A helical membrane pass occupies residues 277–297; it reads IKMVTKVMFLYIPLPMFWALF. Residues 298-327 lie on the Extracellular side of the membrane; the sequence is DQQGSRWTLQATTMNGKIGAIEIQPDQMQT. Residues 328–348 form a helical membrane-spanning segment; sequence VNAILIVIMVPIVDAVVYPLI. The Cytoplasmic portion of the chain corresponds to 349–361; it reads AKCGFNFTSLKKM. A helical transmembrane segment spans residues 362-382; the sequence is TVGMFLASMAFVVAAIVQVEI. The Extracellular portion of the chain corresponds to 383-585; the sequence is DKTLPVFPGG…PPNTVNMALQ (203 aa). The segment at 383-585 is extracellular domain (ECD); that stretch reads DKTLPVFPGG…PPNTVNMALQ (203 aa). N406, N439, N515, and N532 each carry an N-linked (GlcNAc...) asparagine glycan. The helical transmembrane segment at 586–606 threads the bilayer; that stretch reads IPQYFLLTCGEVVFSVTGLEF. Residues 607 to 620 lie on the Cytoplasmic side of the membrane; that stretch reads SYSQAPSNMKSVLQ. A helical membrane pass occupies residues 621-641; the sequence is AGWLLTVAVGNIIVLIVAGAG. Residues 642–646 lie on the Extracellular side of the membrane; it reads HFPKQ. A helical transmembrane segment spans residues 647–667; the sequence is WAEYILFASLLLVVCVIFAIM. The Cytoplasmic segment spans residues 668–709; the sequence is ARFYTYINPAEIEAQFDEDEKKKGIGKENPYSSLEPVSQTNM. Residues 690–709 form a disordered region; the sequence is KGIGKENPYSSLEPVSQTNM. The segment covering 697–709 has biased composition (polar residues); it reads PYSSLEPVSQTNM.

It belongs to the major facilitator superfamily. Proton-dependent oligopeptide transporter (POT/PTR) (TC 2.A.17) family. Interacts (via extracellular domain region) with trypsin.

The protein resides in the apical cell membrane. The catalysed reaction is a dipeptide(out) + H(+)(out) = a dipeptide(in) + H(+)(in). It catalyses the reaction an L-amino acid tripeptide(out) + H(+)(out) = an L-amino acid tripeptide(in) + H(+)(in). The enzyme catalyses L-alanyl-L-lysine(out) + H(+)(out) = L-alanyl-L-lysine(in) + H(+)(in). It carries out the reaction L-alanyl-L-proline(out) + H(+)(out) = L-alanyl-L-proline(in) + H(+)(in). The catalysed reaction is L-alanyl-L-valine(out) + H(+)(out) = L-alanyl-L-valine(in) + H(+)(in). It catalyses the reaction carnosine(out) + H(+)(out) = carnosine(in) + H(+)(in). The enzyme catalyses glycyl-L-glutamine(out) + H(+)(out) = glycyl-L-glutamine(in) + H(+)(in). It carries out the reaction glycyl-L-leucine(out) + H(+)(out) = glycyl-L-leucine(in) + H(+)(in). The catalysed reaction is glycyl-L-proline(out) + H(+)(out) = glycyl-L-proline(in) + H(+)(in). It catalyses the reaction glycyl-sarcosine(out) + H(+)(out) = glycyl-sarcosine(in) + H(+)(in). The enzyme catalyses L-leucyl-L-leucine(out) + H(+)(out) = L-leucyl-L-leucine(in) + H(+)(in). It carries out the reaction L-leucyl-L-proline(out) + H(+)(out) = L-leucyl-L-proline(in) + H(+)(in). The catalysed reaction is L-phenylalanyl-L-leucine(out) + H(+)(out) = L-phenylalanyl-L-leucine(in) + H(+)(in). It catalyses the reaction L-phenylalanyl-L-phenylalanine(out) + H(+)(out) = L-phenylalanyl-L-phenylalanine(in) + H(+)(in). The enzyme catalyses L-lysyl-glycine(out) + H(+)(out) = L-lysyl-glycine(in) + H(+)(in). It carries out the reaction L-tyrosylglycine(out) + H(+)(out) = L-tyrosylglycine(in) + H(+)(in). The catalysed reaction is L-alanyl-L-aspartate(out) + 2 H(+)(out) = L-alanyl-L-aspartate(in) + 2 H(+)(in). It catalyses the reaction L-aspartyl-glycine(out) + 2 H(+)(out) = L-aspartyl-glycine(in) + 2 H(+)(in). The enzyme catalyses glycyl-L-aspartate(out) + 2 H(+)(out) = glycyl-L-aspartate(in) + 2 H(+)(in). It carries out the reaction glycyl-L-glutamate(out) + 2 H(+)(out) = glycyl-L-glutamate(in) + 2 H(+)(in). The catalysed reaction is L-alanyl-L-leucyl-L-alanine(out) + H(+)(out) = L-alanyl-L-leucyl-L-alanine(in) + H(+)(in). It catalyses the reaction L-alanyl-L-prolylglycine(out) + H(+)(out) = L-alanyl-L-prolylglycine(in) + H(+)(in). The enzyme catalyses glycylglycyl-L-isoleucine(out) + H(+)(out) = glycylglycyl-L-isoleucine(in) + H(+)(in). It carries out the reaction glycylglycyl-L-proline(out) + H(+)(out) = glycylglycyl-L-proline(in) + H(+)(in). The catalysed reaction is L-methionyl-L-phenylalanyl-L-methionine(out) + H(+)(out) = L-methionyl-L-phenylalanyl-L-methionine(in) + H(+)(in). It catalyses the reaction N-acetyl-D-muramoyl-L-alanyl-D-isoglutamine(out) + 2 H(+)(out) = N-acetyl-D-muramoyl-L-alanyl-D-isoglutamine(in) + 2 H(+)(in). The enzyme catalyses N(alpha)-formyl-L-methionyl-L-leucyl-L-phenylalanine(out) + 2 H(+)(out) = N(alpha)-formyl-L-methionyl-L-leucyl-L-phenylalanine(in) + 2 H(+)(in). In terms of biological role, electrogenic proton-coupled amino-acid transporter that transports oligopeptides of 2 to 4 amino acids with a preference for dipeptides. Transports neutral and monovalently charged peptides with a proton to peptide stoichiometry of 1:1 or 2:1. Primarily responsible for the absorption of dietary di- and tripeptides from the small intestinal lumen. Mediates transepithelial transport of muramyl and N-formylated bacterial dipeptides contributing to recognition of pathogenic bacteria by the mucosal immune system. The chain is Solute carrier family 15 member 1 from Mus musculus (Mouse).